The chain runs to 436 residues: Glutamyl-tRNA reductase (436 aa).

Substrate is bound by residues 50 to 53, Ser110, 115 to 117, and Gln121; these read TCNR and ETQ. The Nucleophile role is filled by Cys51. 190–195 is a binding site for NADP(+); it reads GLGEMS.

The protein belongs to the glutamyl-tRNA reductase family. In terms of assembly, homodimer.

It carries out the reaction (S)-4-amino-5-oxopentanoate + tRNA(Glu) + NADP(+) = L-glutamyl-tRNA(Glu) + NADPH + H(+). Its pathway is porphyrin-containing compound metabolism; protoporphyrin-IX biosynthesis; 5-aminolevulinate from L-glutamyl-tRNA(Glu): step 1/2. Its function is as follows. Catalyzes the NADPH-dependent reduction of glutamyl-tRNA(Glu) to glutamate 1-semialdehyde (GSA). This Wolinella succinogenes (strain ATCC 29543 / DSM 1740 / CCUG 13145 / JCM 31913 / LMG 7466 / NCTC 11488 / FDC 602W) (Vibrio succinogenes) protein is Glutamyl-tRNA reductase.